The following is a 619-amino-acid chain: Calnexin (619 aa).

A signal peptide spans 1-21 (MVNRKWMYIFIQFLLVSSIRS). Asp-109 contacts Ca(2+). Cys-152 and Cys-186 are disulfide-bonded. 4 residues coordinate an alpha-D-glucoside: Tyr-156, Lys-158, Tyr-177, and Asp-184. Residue Asn-203 is glycosylated (N-linked (GlcNAc...) asparagine). The tract at residues 268–401 (IFDETDLKPV…RLIDNPNYFE (134 aa)) is p domain (Extended arm). Tandem repeats lie at residues 270–282 (DETD…WDER), 287–299 (DESA…WDEN), 306–318 (DEAA…WNEE), 325–337 (DPEA…WDED), and 340–350 (GSWEAPLIDNP). 4 X approximate repeats stretches follow at residues 270 to 337 (DETD…WDED) and 340 to 397 (GSWE…IDNP). A disulfide bridge links Cys-352 with Cys-358. 3 tandem repeats follow at residues 359–369 (GTWKAPTIKNP), 373–383 (GKWIRPKISNP), and 387–397 (GKWTARLIDNP). Glu-417 contributes to the an alpha-D-glucoside binding site. Position 428 (Asp-428) interacts with Ca(2+). Residues 481–501 (LWAVYILCVLLPLVAIGVFCF) form a helical membrane-spanning segment. Positions 538 to 619 (GDEEDDVNQP…AKRRTARRGD (82 aa)) are disordered. Residues 547–557 (PGPSGSQSNPE) are compositionally biased toward polar residues. Positions 566–577 (EQQSANSSQSSA) are enriched in low complexity. Asn-571 carries an N-linked (GlcNAc...) asparagine glycan. Positions 585 to 601 (HVVPENEPVKPTEEFAK) are enriched in basic and acidic residues. The span at 610-619 (AKRRTARRGD) shows a compositional bias: basic residues.

It belongs to the calreticulin family. In terms of processing, glycosylation is important for its biological activity. Expressed ubiquitously in every blastomere of the embryo up to the gastrulation stage. Expression becomes gradually restricted to the head and tail regions at the comma stage during embryogenesis. During postembryonic development, expressed prominently in the H-shaped excretory cell, in the neurons of head (including ASK and ADL) and tail (including PHA and PHB), in the dorsal and ventral nerve cords, and in the spermatheca. Expressed in the spicules of the male tail (at protein level).

It localises to the endoplasmic reticulum membrane. The protein resides in the cytoplasm. It is found in the perinuclear region. Its subcellular location is the cytoplasmic vesicle. Calcium-binding protein that interacts with newly synthesized monoglucosylated glycoproteins in the endoplasmic reticulum. It may act in assisting protein assembly and/or in the retention within the ER of unassembled protein subunits. It seems to play a major role in the quality control apparatus of the ER by the retention of incorrectly folded proteins. Required for embryogenesis and larval development under heat and ER stress conditions. May be important for germ cell development. Involved in neuronal necrotic cell death. This chain is Calnexin (cnx-1), found in Caenorhabditis elegans.